A 74-amino-acid polypeptide reads, in one-letter code: WAP four-disulfide core domain protein 18 (74 aa).

The first 24 residues, 1–24 (MKTATVFVLVALIFMTMTTAWALS), serve as a signal peptide directing secretion. The WAP domain occupies 26–73 (PKEKPGACPKPPPRSFGTCDERCTGDGSCSGNMKCCSNGCGHACKPPV).

It localises to the secreted. Functionally, could have proteinase inhibiting capacity. The sequence is that of WAP four-disulfide core domain protein 18 (WFDC18) from Bos taurus (Bovine).